The following is a 463-amino-acid chain: Mitochondrial distribution and morphology protein 10 (463 aa).

It belongs to the MDM10 family. As to quaternary structure, component of the ER-mitochondria encounter structure (ERMES) or MDM complex, composed of MMM1, MDM10, MDM12 and MDM34. Associates with the mitochondrial outer membrane sorting assembly machinery SAM(core) complex.

It localises to the mitochondrion outer membrane. Functionally, component of the ERMES/MDM complex, which serves as a molecular tether to connect the endoplasmic reticulum and mitochondria. Components of this complex are involved in the control of mitochondrial shape and protein biogenesis and may function in phospholipid exchange. MDM10 is involved in the late assembly steps of the general translocase of the mitochondrial outer membrane (TOM complex). Functions in the TOM40-specific route of the assembly of outer membrane beta-barrel proteins, including the association of TOM40 with the receptor TOM22 and small TOM proteins. Can associate with the SAM(core) complex as well as the MDM12-MMM1 complex, both involved in late steps of the major beta-barrel assembly pathway, that is responsible for biogenesis of all outer membrane beta-barrel proteins. May act as a switch that shuttles between both complexes and channels precursor proteins into the TOM40-specific pathway. Plays a role in mitochondrial morphology and in the inheritance of mitochondria. The polypeptide is Mitochondrial distribution and morphology protein 10 (Candida dubliniensis (strain CD36 / ATCC MYA-646 / CBS 7987 / NCPF 3949 / NRRL Y-17841) (Yeast)).